A 453-amino-acid chain; its full sequence is Secreted triacylglycerol lipase LIP3 (453 aa).

An N-terminal signal peptide occupies residues 1–19; sequence MKLGIVAFTLISFAAQALA. An N-linked (GlcNAc...) asparagine glycan is attached at asparagine 98. Cysteine 115 and cysteine 284 are oxidised to a cystine. Catalysis depends on serine 197, which acts as the Nucleophile. Asparagine 230 carries N-linked (GlcNAc...) asparagine glycosylation. Catalysis depends on residues aspartate 344 and histidine 378. A disulfide bridge links cysteine 360 with cysteine 406.

Belongs to the AB hydrolase superfamily. Lipase family. Class Lip subfamily.

The protein resides in the secreted. It is found in the cell wall. It carries out the reaction a triacylglycerol + H2O = a diacylglycerol + a fatty acid + H(+). The catalysed reaction is a monoacylglycerol + H2O = glycerol + a fatty acid + H(+). It catalyses the reaction a diacylglycerol + H2O = a monoacylglycerol + a fatty acid + H(+). Its function is as follows. Secreted lipase involved in Dandruff and seborrheic dermatitis (D/SD) probably via lipase-mediated breakdown of sebaceous lipids and release of irritating free fatty acids. Has triacylglycerol lipase activity and is able to hydrolyze triolein, tristearin, trilinolein, tripalmitoylglycerol and trihexadecenoin. Hydrolyzes diacylglycerols such as distearin, dilinolein, dipalmitoylglycerol and dipalmitolein. Mostly converts monoolein to di- and triolein, while free fatty acids are only produced in low amounts. The polypeptide is Secreted triacylglycerol lipase LIP3 (Malassezia globosa (strain ATCC MYA-4612 / CBS 7966) (Dandruff-associated fungus)).